Reading from the N-terminus, the 645-residue chain is MAKEKRILDLEKTIKKHQDLYYNAQPEISDAEFDALWDELKALDPQNKLFFTVPLESTEGFAKSEHIIPMGSQEKAADPPSFEAWALKMPFKEYIVQYKMDGASLELQYEEGHFVRAVTRGDGKIGDDITENVLKMKGLIKDITVNAGPAYGTKPFSGGIRCEVIMLRSIHQKYFKDKANCRNAANGLMKKKNGELCEHLNLFAYDAVQGSIGRPFTGDAPFKTESEKLVWLKKAGFNCVEVKYCKSIAEVIEYRAHVMDIRPSLDYDIDGLVIKNDTIDPEDMKRARPEKQIAFKFSLEEAVTVLKEIEWSESGATYTPIALIEPVRLAGTTVKRASLANPNIIKALNLKIGSRVVVTKRGEIIPKIEALAENPPNVKEIEYPDTCSVCGSPLTNEGTRLYCPNMSCPKLIHHRIEKWISVLDIRDFGITLIKRLFEMGRVNSITDLYTLTVEELAAIDRMGKLSAEKVYKALHSKKEISLTEFIAGFDIEGIGETMVEKLEEAGFNDLNELLGASEADFANVYQFGQVLSHTLVTNLSILKDEMTGLIDKGYIKIKPPLTSEEGAVLKGLSFCFTGELNTMKRAQAEALVKEKGGTVKSSVVKGLSYLVTNTPDSGSSKNKKAQELGTAIITEEAFLNLIGKV.

Residues Asp30 to Asp34 and Ser72 to Gln73 each bind NAD(+). Catalysis depends on Lys99, which acts as the N6-AMP-lysine intermediate. Residues Arg120, Glu163, Lys275, and Lys296 each contribute to the NAD(+) site. Positions 387, 390, 403, and 408 each coordinate Zn(2+). Residues Glu564–Val645 form the BRCT domain.

Belongs to the NAD-dependent DNA ligase family. LigA subfamily. Mg(2+) serves as cofactor. It depends on Mn(2+) as a cofactor.

The catalysed reaction is NAD(+) + (deoxyribonucleotide)n-3'-hydroxyl + 5'-phospho-(deoxyribonucleotide)m = (deoxyribonucleotide)n+m + AMP + beta-nicotinamide D-nucleotide.. DNA ligase that catalyzes the formation of phosphodiester linkages between 5'-phosphoryl and 3'-hydroxyl groups in double-stranded DNA using NAD as a coenzyme and as the energy source for the reaction. It is essential for DNA replication and repair of damaged DNA. This Treponema denticola (strain ATCC 35405 / DSM 14222 / CIP 103919 / JCM 8153 / KCTC 15104) protein is DNA ligase.